Reading from the N-terminus, the 488-residue chain is Glutamyl-tRNA(Gln) amidotransferase subunit B, mitochondrial (488 aa).

Belongs to the GatB/GatE family. GatB subfamily. In terms of assembly, subunit of the heterotrimeric GatFAB amidotransferase (AdT) complex, composed of A, B and F subunits.

Its subcellular location is the mitochondrion. The catalysed reaction is L-glutamyl-tRNA(Gln) + L-glutamine + ATP + H2O = L-glutaminyl-tRNA(Gln) + L-glutamate + ADP + phosphate + H(+). Its function is as follows. Allows the formation of correctly charged Gln-tRNA(Gln) through the transamidation of misacylated Glu-tRNA(Gln) in the mitochondria. The reaction takes place in the presence of glutamine and ATP through an activated gamma-phospho-Glu-tRNA(Gln). This chain is Glutamyl-tRNA(Gln) amidotransferase subunit B, mitochondrial, found in Candida albicans (strain SC5314 / ATCC MYA-2876) (Yeast).